We begin with the raw amino-acid sequence, 79 residues long: Putative defensin-like protein 137 (79 aa).

The N-terminal stretch at 1 to 24 is a signal peptide; that stretch reads MKKYFQPSFVILIIFTVLVLGVVG. 4 disulfide bridges follow: C33–C78, C42–C62, C47–C72, and C51–C74.

This sequence belongs to the DEFL family.

It localises to the secreted. This is Putative defensin-like protein 137 (LCR14) from Arabidopsis thaliana (Mouse-ear cress).